Consider the following 72-residue polypeptide: Protein kish-A (72 aa).

An N-terminal signal peptide occupies residues 1-26; that stretch reads MSAIFNFQSLLTVILLLICTCAYIRS. Residues 27 to 53 lie on the Extracellular side of the membrane; it reads LAPSLLDKNKSGLLGIFWKCARIGERK. N-linked (GlcNAc...) asparagine glycosylation occurs at asparagine 35. A helical membrane pass occupies residues 54-71; that stretch reads SPYVAVCCVVMAFSILFM. Residue glutamine 72 is a topological domain, cytoplasmic.

This sequence belongs to the KISH family.

It localises to the golgi apparatus membrane. Its function is as follows. Involved in the early part of the secretory pathway. This is Protein kish-A (TMEM167A) from Taeniopygia guttata (Zebra finch).